The primary structure comprises 388 residues: MTSVSLGMPAAPPPVLAPRRKTRQIKVGSVGVGSDSPISVQSMTTTPTTDINATLQQIAELTASGCDIVRVACPSADDAEALPIIARKSQIPVIADIHFQPKYVFAAIEAGCAAVRVNPGNIRKFDDQVKEIAAAARDHGTSIRIGVNAGSLEPGILKKYGKATPEALVESAVWEASLFEEHGFHDFKISVKHNDPVIMVAAYEMLAEKGDWPLHLGVTEAGPAFQGTIKSATAFGALLSRGIGDTIRVSLSAPPVEEIKVGNQILQSLNLRPRKLEIVSCPSCGRAQVDVYTLAEQVTAGLEGMEIPLRVAVMGCVVNGPGEAREADLGVASGNGKGQIFVKGEVIKTVPESQIVETLIEEAMRIAEEMGEADGEDAVKGGPVVSVS.

Residues Cys281, Cys284, Cys316, and Glu323 each coordinate [4Fe-4S] cluster.

The protein belongs to the IspG family. The cofactor is [4Fe-4S] cluster.

It carries out the reaction (2E)-4-hydroxy-3-methylbut-2-enyl diphosphate + oxidized [flavodoxin] + H2O + 2 H(+) = 2-C-methyl-D-erythritol 2,4-cyclic diphosphate + reduced [flavodoxin]. It participates in isoprenoid biosynthesis; isopentenyl diphosphate biosynthesis via DXP pathway; isopentenyl diphosphate from 1-deoxy-D-xylulose 5-phosphate: step 5/6. Converts 2C-methyl-D-erythritol 2,4-cyclodiphosphate (ME-2,4cPP) into 1-hydroxy-2-methyl-2-(E)-butenyl 4-diphosphate. This chain is 4-hydroxy-3-methylbut-2-en-1-yl diphosphate synthase (flavodoxin), found in Pseudarthrobacter chlorophenolicus (strain ATCC 700700 / DSM 12829 / CIP 107037 / JCM 12360 / KCTC 9906 / NCIMB 13794 / A6) (Arthrobacter chlorophenolicus).